The chain runs to 105 residues: Pyrimidine/purine nucleoside phosphorylase (105 aa).

This sequence belongs to the nucleoside phosphorylase PpnP family.

The enzyme catalyses a purine D-ribonucleoside + phosphate = a purine nucleobase + alpha-D-ribose 1-phosphate. The catalysed reaction is adenosine + phosphate = alpha-D-ribose 1-phosphate + adenine. It catalyses the reaction cytidine + phosphate = cytosine + alpha-D-ribose 1-phosphate. It carries out the reaction guanosine + phosphate = alpha-D-ribose 1-phosphate + guanine. The enzyme catalyses inosine + phosphate = alpha-D-ribose 1-phosphate + hypoxanthine. The catalysed reaction is thymidine + phosphate = 2-deoxy-alpha-D-ribose 1-phosphate + thymine. It catalyses the reaction uridine + phosphate = alpha-D-ribose 1-phosphate + uracil. It carries out the reaction xanthosine + phosphate = alpha-D-ribose 1-phosphate + xanthine. Functionally, catalyzes the phosphorolysis of diverse nucleosides, yielding D-ribose 1-phosphate and the respective free bases. Can use uridine, adenosine, guanosine, cytidine, thymidine, inosine and xanthosine as substrates. Also catalyzes the reverse reactions. The sequence is that of Pyrimidine/purine nucleoside phosphorylase from Wolinella succinogenes (strain ATCC 29543 / DSM 1740 / CCUG 13145 / JCM 31913 / LMG 7466 / NCTC 11488 / FDC 602W) (Vibrio succinogenes).